The sequence spans 142 residues: Universal stress protein C (142 aa).

It belongs to the universal stress protein A family.

It is found in the cytoplasm. Its function is as follows. Required for resistance to DNA-damaging agents. In Escherichia coli O6:H1 (strain CFT073 / ATCC 700928 / UPEC), this protein is Universal stress protein C (uspC).